The primary structure comprises 263 residues: MKKELLKILREKKPLVHHITNVVTVNDCANITLAIGALPVMAHALEEVEEMVSAADALVLNIGTLTNEQVEAMIKAGKAANRFKVPVILDPVGAGATKLRTQSSKKILEEVKISVIKGNSAEISILAGKGGKIRGVESQGGVDDIAEAAKDLANAYNVVVAMSGATDIITDGKRIAYVKNGHPMMGTITGTGCMLTSVVASFCGVCEDYFETTIEAFVAFGIAGERAAQSSNVKGPGSFKVTFFDEIYNLTPEIIEKDKKVEV.

Residue Met-41 participates in substrate binding. Positions 117 and 163 each coordinate ATP. Substrate is bound at residue Gly-190.

Belongs to the Thz kinase family. Requires Mg(2+) as cofactor.

It catalyses the reaction 5-(2-hydroxyethyl)-4-methylthiazole + ATP = 4-methyl-5-(2-phosphooxyethyl)-thiazole + ADP + H(+). It participates in cofactor biosynthesis; thiamine diphosphate biosynthesis; 4-methyl-5-(2-phosphoethyl)-thiazole from 5-(2-hydroxyethyl)-4-methylthiazole: step 1/1. Its function is as follows. Catalyzes the phosphorylation of the hydroxyl group of 4-methyl-5-beta-hydroxyethylthiazole (THZ). The polypeptide is Hydroxyethylthiazole kinase (Thermoanaerobacter sp. (strain X514)).